The sequence spans 459 residues: MQIQFRLYNTLSRTKEVFNPQDQDNVKMYVCGPTVYYNPHIGNSRSGVVYDLLYRIVIKIFGEKAVKYVRNITDVDDKIIDRAALLGVTIDELTDKVTKEFHKNMAYLGCMLPSIEPKATKHIDVMIAIIERLIAKDHAYIADNHVYFDVLSAPNYTELSNRNLEEMFEGVHVENSKTKKNPQDFVLWKPAKQNESANMNFESPWGLGRPGWHIECSAMSYKYLGENFDIHGGGADLIFPHHTNEIAQSRCAFPSSTYAKYWVHNGFLTVNGEKMSKSLGNFITVRDLMDKQIQGEVVRLFLLSSHYRRPLDYNDKAIEDAKKTLDYWYRAIENINVQKIDLPHDFMQSLLDDMNTPLAVKIINDYAKGVFISKTEEERQLNASAIITCANFIGLMNKSPHEWFNSGVDELYINELVNKRLEAKKHKNWLLADQIRNQLLEEKIILEDQPDGTTIWRKE.

Cys31 lines the Zn(2+) pocket. The 'HIGH' region motif lies at 33 to 43; the sequence is PTVYYNPHIGN. Positions 216, 241, and 245 each coordinate Zn(2+). The 'KMSKS' region signature appears at 274–278; the sequence is KMSKS. Residue Lys277 participates in ATP binding.

The protein belongs to the class-I aminoacyl-tRNA synthetase family. Monomer. Zn(2+) serves as cofactor.

The protein localises to the cytoplasm. It carries out the reaction tRNA(Cys) + L-cysteine + ATP = L-cysteinyl-tRNA(Cys) + AMP + diphosphate. This Rickettsia rickettsii (strain Iowa) protein is Cysteine--tRNA ligase.